The primary structure comprises 429 residues: DNA primase DnaG (429 aa).

In terms of domain architecture, Toprim spans 172–246; that stretch reads DSIIVVEGRN…DVDFIARAPP (75 aa). Mg(2+) is bound by residues Glu178, Asp220, and Asp222. Residues 287 to 322 form a disordered region; the sequence is RNTKELEERQGNELKNERPEKINENEESEKNVELKE.

This sequence belongs to the archaeal DnaG primase family. Forms a ternary complex with MCM helicase and DNA. Component of the archaeal exosome complex. Requires Mg(2+) as cofactor.

The enzyme catalyses ssDNA + n NTP = ssDNA/pppN(pN)n-1 hybrid + (n-1) diphosphate.. In terms of biological role, RNA polymerase that catalyzes the synthesis of short RNA molecules used as primers for DNA polymerase during DNA replication. Also part of the exosome, which is a complex involved in RNA degradation. Acts as a poly(A)-binding protein that enhances the interaction between heteromeric, adenine-rich transcripts and the exosome. In Picrophilus torridus (strain ATCC 700027 / DSM 9790 / JCM 10055 / NBRC 100828 / KAW 2/3), this protein is DNA primase DnaG.